The following is a 559-amino-acid chain: Paxillin (559 aa).

An LD motif 1 motif is present at residues 3–15 (DLDALLADLESTT). A disordered region spans residues 17-139 (HISKRPVFLT…SPTMTSTSLG (123 aa)). Phosphotyrosine is present on Y31. The span at 45–54 (VPPPVPPPPS) shows a compositional bias: pro residues. The segment covering 79 to 98 (QQPQSQSPIYSSSAKSSSAS) has biased composition (low complexity). Y118 is subject to Phosphotyrosine; by FAK1. The segment covering 121-137 (PNKQKSAEPSPTMTSTS) has biased composition (polar residues). An LD motif 2 motif is present at residues 144 to 156 (ELDRLLLELNAVQ). 2 disordered regions span residues 158 to 213 (NPPS…GIED) and 225 to 262 (LESS…SASS). The LD motif 3 signature appears at 217–229 (SVESLLDELESSV). Positions 237–262 (TVSQGEVSSPQRVNASQQQTRISASS) are enriched in polar residues. Residues 263 to 282 (ATRELDELMASLSDFKFMAQ) are required for binding to PARVA and ILK. 2 short sequence motifs (LD motif) span residues 266–277 (ELDELMASLSDF) and 301–313 (QLDT…QSDL). Residues 281–301 (AQGKAGGSSSPPSTTPKPGSQ) form a disordered region. 4 LIM zinc-binding domains span residues 326–376 (CGAC…CEKD), 385–435 (CYYC…CRKD), 444–494 (CGGC…CEVH), and 503–553 (CSGC…CQNC).

Interacts (via LD motif 4) with PARVA/PARVIN and ILK. Phosphorylated on tyrosine residues during integrin-mediated cell adhesion, embryonic development, fibroblast transformation and following stimulation of cells by mitogens.

It localises to the cytoplasm. The protein resides in the cytoskeleton. It is found in the cell junction. Its subcellular location is the focal adhesion. The protein localises to the cell cortex. Cytoskeletal protein involved in actin-membrane attachment at sites of cell adhesion to the extracellular matrix (focal adhesion). Binds in vitro to vinculin as well as to the SH3 domain of c-SRC and, when tyrosine phosphorylated, to the SH2 domain of v-CRK. The protein is Paxillin (PXN) of Gallus gallus (Chicken).